The primary structure comprises 515 residues: Histidine ammonia-lyase (515 aa).

The segment at residues 142 to 144 (ASG) is a cross-link (5-imidazolinone (Ala-Gly)). 2,3-didehydroalanine (Ser) is present on Ser-143.

This sequence belongs to the PAL/histidase family. In terms of processing, contains an active site 4-methylidene-imidazol-5-one (MIO), which is formed autocatalytically by cyclization and dehydration of residues Ala-Ser-Gly.

It is found in the cytoplasm. The enzyme catalyses L-histidine = trans-urocanate + NH4(+). Its pathway is amino-acid degradation; L-histidine degradation into L-glutamate; N-formimidoyl-L-glutamate from L-histidine: step 1/3. The polypeptide is Histidine ammonia-lyase (Methylobacterium nodulans (strain LMG 21967 / CNCM I-2342 / ORS 2060)).